A 401-amino-acid polypeptide reads, in one-letter code: Formate-dependent phosphoribosylglycinamide formyltransferase (401 aa).

N(1)-(5-phospho-beta-D-ribosyl)glycinamide is bound by residues glutamate 22 to leucine 23 and glutamate 82. Residues arginine 115, lysine 157, serine 162–glutamine 167, glutamate 197–isoleucine 200, and glutamate 205 contribute to the ATP site. An ATP-grasp domain is found at arginine 120 to leucine 315. Glutamate 274 and glutamate 286 together coordinate Mg(2+). Residues aspartate 293, lysine 362, and arginine 369–arginine 370 each bind N(1)-(5-phospho-beta-D-ribosyl)glycinamide.

It belongs to the PurK/PurT family. As to quaternary structure, homodimer.

The catalysed reaction is N(1)-(5-phospho-beta-D-ribosyl)glycinamide + formate + ATP = N(2)-formyl-N(1)-(5-phospho-beta-D-ribosyl)glycinamide + ADP + phosphate + H(+). The protein operates within purine metabolism; IMP biosynthesis via de novo pathway; N(2)-formyl-N(1)-(5-phospho-D-ribosyl)glycinamide from N(1)-(5-phospho-D-ribosyl)glycinamide (formate route): step 1/1. In terms of biological role, involved in the de novo purine biosynthesis. Catalyzes the transfer of formate to 5-phospho-ribosyl-glycinamide (GAR), producing 5-phospho-ribosyl-N-formylglycinamide (FGAR). Formate is provided by PurU via hydrolysis of 10-formyl-tetrahydrofolate. The sequence is that of Formate-dependent phosphoribosylglycinamide formyltransferase from Cupriavidus taiwanensis (strain DSM 17343 / BCRC 17206 / CCUG 44338 / CIP 107171 / LMG 19424 / R1) (Ralstonia taiwanensis (strain LMG 19424)).